A 125-amino-acid polypeptide reads, in one-letter code: Large ribosomal subunit protein bL12 (125 aa).

It belongs to the bacterial ribosomal protein bL12 family. In terms of assembly, homodimer. Part of the ribosomal stalk of the 50S ribosomal subunit. Forms a multimeric L10(L12)X complex, where L10 forms an elongated spine to which 2 to 4 L12 dimers bind in a sequential fashion. Binds GTP-bound translation factors.

Functionally, forms part of the ribosomal stalk which helps the ribosome interact with GTP-bound translation factors. Is thus essential for accurate translation. This is Large ribosomal subunit protein bL12 from Endomicrobium trichonymphae.